The following is a 486-amino-acid chain: UDP-N-acetylmuramate--L-alanine ligase (486 aa).

ATP is bound at residue 129–135 (GTHGKTT).

The protein belongs to the MurCDEF family.

The protein localises to the cytoplasm. The enzyme catalyses UDP-N-acetyl-alpha-D-muramate + L-alanine + ATP = UDP-N-acetyl-alpha-D-muramoyl-L-alanine + ADP + phosphate + H(+). The protein operates within cell wall biogenesis; peptidoglycan biosynthesis. Its function is as follows. Cell wall formation. In Vibrio atlanticus (strain LGP32) (Vibrio splendidus (strain Mel32)), this protein is UDP-N-acetylmuramate--L-alanine ligase.